Consider the following 1409-residue polypeptide: DNA-directed RNA polymerase subunit beta' (1409 aa).

Cysteine 70, cysteine 72, cysteine 85, and cysteine 88 together coordinate Zn(2+). Residues aspartate 460, aspartate 462, and aspartate 464 each contribute to the Mg(2+) site. Positions 822, 896, 903, and 906 each coordinate Zn(2+).

This sequence belongs to the RNA polymerase beta' chain family. As to quaternary structure, the RNAP catalytic core consists of 2 alpha, 1 beta, 1 beta' and 1 omega subunit. When a sigma factor is associated with the core the holoenzyme is formed, which can initiate transcription. Requires Mg(2+) as cofactor. Zn(2+) is required as a cofactor.

It carries out the reaction RNA(n) + a ribonucleoside 5'-triphosphate = RNA(n+1) + diphosphate. Functionally, DNA-dependent RNA polymerase catalyzes the transcription of DNA into RNA using the four ribonucleoside triphosphates as substrates. In Methylobacillus flagellatus (strain ATCC 51484 / DSM 6875 / VKM B-1610 / KT), this protein is DNA-directed RNA polymerase subunit beta'.